We begin with the raw amino-acid sequence, 178 residues long: Cytidylate kinase (178 aa).

Residue 7 to 15 (GLPGTGTTT) coordinates ATP.

The protein belongs to the cytidylate kinase family. Type 2 subfamily.

The protein resides in the cytoplasm. It catalyses the reaction CMP + ATP = CDP + ADP. The enzyme catalyses dCMP + ATP = dCDP + ADP. The protein is Cytidylate kinase of Methanococcus maripaludis (strain DSM 14266 / JCM 13030 / NBRC 101832 / S2 / LL).